The following is a 259-amino-acid chain: 4-hydroxy-tetrahydrodipicolinate reductase (259 aa).

9 to 14 contacts NAD(+); that stretch reads GANGRM. Position 37 (Arg37) interacts with NADP(+). Residues 92-94 and 116-119 contribute to the NAD(+) site; these read GTT and ASNM. The Proton donor/acceptor role is filled by His149. A (S)-2,3,4,5-tetrahydrodipicolinate-binding site is contributed by His150. The active-site Proton donor is the Lys153. 159 to 160 is a (S)-2,3,4,5-tetrahydrodipicolinate binding site; it reads GT.

This sequence belongs to the DapB family.

Its subcellular location is the cytoplasm. The enzyme catalyses (S)-2,3,4,5-tetrahydrodipicolinate + NAD(+) + H2O = (2S,4S)-4-hydroxy-2,3,4,5-tetrahydrodipicolinate + NADH + H(+). It carries out the reaction (S)-2,3,4,5-tetrahydrodipicolinate + NADP(+) + H2O = (2S,4S)-4-hydroxy-2,3,4,5-tetrahydrodipicolinate + NADPH + H(+). Its pathway is amino-acid biosynthesis; L-lysine biosynthesis via DAP pathway; (S)-tetrahydrodipicolinate from L-aspartate: step 4/4. Catalyzes the conversion of 4-hydroxy-tetrahydrodipicolinate (HTPA) to tetrahydrodipicolinate. The sequence is that of 4-hydroxy-tetrahydrodipicolinate reductase from Desulfovibrio desulfuricans (strain ATCC 27774 / DSM 6949 / MB).